Consider the following 208-residue polypeptide: MACCTGRCTLILLCTLQLVAALERQVFDFLGYQWAPILANFLHIVATILGLFGTLQYRPRYVIAYALWAAVWVTWNVFLICFYLEVGDLNKESELLTFHVSQHQSWWSEHGPGCVRKEAPVAGVAELESHSYVSVIGCNVEYQYIEVMHSALQILLALLGFVYACYVTSVFTEEEDSFDFIGGFDPFPLYHVNEKSNHLLFKQSYLPA.

Transmembrane regions (helical) follow at residues 10–30 (LILLCTLQLVAALERQVFDFL), 35–55 (APILANFLHIVATILGLFGTL), 62–82 (VIAYALWAAVWVTWNVFLICF), and 151–171 (ALQILLALLGFVYACYVTSVF).

It belongs to the NKAIN family. As to quaternary structure, interacts with atp1b1 C-terminus.

The protein localises to the cell membrane. The chain is Sodium/potassium-transporting ATPase subunit beta-1-interacting protein 4 (nkain4) from Xenopus tropicalis (Western clawed frog).